Consider the following 142-residue polypeptide: ATP synthase epsilon chain (142 aa).

It belongs to the ATPase epsilon chain family. As to quaternary structure, F-type ATPases have 2 components, CF(1) - the catalytic core - and CF(0) - the membrane proton channel. CF(1) has five subunits: alpha(3), beta(3), gamma(1), delta(1), epsilon(1). CF(0) has three main subunits: a, b and c.

The protein localises to the cell membrane. Functionally, produces ATP from ADP in the presence of a proton gradient across the membrane. This is ATP synthase epsilon chain from Lactiplantibacillus plantarum (strain ATCC BAA-793 / NCIMB 8826 / WCFS1) (Lactobacillus plantarum).